We begin with the raw amino-acid sequence, 371 residues long: 3-isopropylmalate dehydrogenase (371 aa).

Residue 77 to 90 (GPKWDDNPPHLRPE) participates in NAD(+) binding. Substrate is bound by residues R97, R107, R135, and D224. Residues D224, D248, and D252 each contribute to the Mg(2+) site. Residue 282–294 (GSAPDIAGMNKAN) coordinates NAD(+).

Belongs to the isocitrate and isopropylmalate dehydrogenases family. LeuB type 1 subfamily. As to quaternary structure, homodimer. Requires Mg(2+) as cofactor. The cofactor is Mn(2+).

The protein localises to the cytoplasm. The catalysed reaction is (2R,3S)-3-isopropylmalate + NAD(+) = 4-methyl-2-oxopentanoate + CO2 + NADH. It functions in the pathway amino-acid biosynthesis; L-leucine biosynthesis; L-leucine from 3-methyl-2-oxobutanoate: step 3/4. Functionally, catalyzes the oxidation of 3-carboxy-2-hydroxy-4-methylpentanoate (3-isopropylmalate) to 3-carboxy-4-methyl-2-oxopentanoate. The product decarboxylates to 4-methyl-2 oxopentanoate. In Geobacillus kaustophilus (strain HTA426), this protein is 3-isopropylmalate dehydrogenase.